The primary structure comprises 189 residues: GTPase NRas (189 aa).

Residues 10–18 (GAGGVGKSA) and 29–30 (VD) each bind GTP. The Effector region motif lies at 32 to 40 (YDPTIEDSY). 57–61 (DTAGQ) lines the GTP pocket. S89 carries the phosphoserine modification. 116–119 (NKCD) serves as a coordination point for GTP. The tract at residues 166-185 (YRLKKLNSSDDGTQGCMGSP) is hypervariable region. A Glycyl lysine isopeptide (Lys-Gly) (interchain with G-Cter in ubiquitin) cross-link involves residue K170. C181 is lipidated: S-palmitoyl cysteine. C186 carries S-farnesyl cysteine lipidation. The propeptide at 187–189 (VLM) is removed in mature form.

It belongs to the small GTPase superfamily. Ras family. In terms of assembly, interacts (active GTP-bound form preferentially) with RGS14. Interacts (active GTP-bound form) with RASSF7. Interacts (active GTP-bound form) with both SHOC2 and PP1c (all isoforms) to form a tertiary complex; SHOC2 and PP1c preferably bind M-Ras/MRAS, but they also bind K-Ras/KRAS, N-Ras/NRAS and H-Ras/HRAS. Post-translationally, palmitoylated by the ZDHHC9-GOLGA7 complex. Depalmitoylated by ABHD17A, ABHD17B and ABHD17C. A continuous cycle of de- and re-palmitoylation regulates rapid exchange between plasma membrane and Golgi. Acetylation at Lys-104 prevents interaction with guanine nucleotide exchange factors (GEFs). In terms of processing, ubiquitinated by the BCR(LZTR1) E3 ubiquitin ligase complex at Lys-170 in a non-degradative manner, leading to inhibit Ras signaling by decreasing Ras association with membranes. Post-translationally, phosphorylation at Ser-89 enhances NRAS association with its downstream effectors.

It localises to the cell membrane. Its subcellular location is the golgi apparatus membrane. The enzyme catalyses GTP + H2O = GDP + phosphate + H(+). Alternates between an inactive form bound to GDP and an active form bound to GTP. Activated by a guanine nucleotide-exchange factor (GEF) and inactivated by a GTPase-activating protein (GAP). Ras proteins bind GDP/GTP and possess intrinsic GTPase activity. This chain is GTPase NRas (Nras), found in Mus musculus (Mouse).